The following is a 498-amino-acid chain: Tyrosine 3-monooxygenase (498 aa).

Residues 1 to 10 (MPTPSAPSPQ) are compositionally biased toward pro residues. The tract at residues 1 to 31 (MPTPSAPSPQPKGFRRAVSEQDAKQAEAVTS) is disordered. Ser-19 bears the Phosphoserine; by CaMK2 mark. Ser-31 carries the phosphoserine modification. The residue at position 40 (Ser-40) is a Phosphoserine; by CaMK2 and PKA. Fe cation-binding residues include His-331, His-336, and Glu-376. Ser-472 is subject to Phosphoserine.

Belongs to the biopterin-dependent aromatic amino acid hydroxylase family. As to quaternary structure, homotetramer. Interacts (when phosphorylated at Ser-19) with YWHAG; one YWHAG dimer binds to one TH tetramer and this interaction may influence the phosphorylation and dephosphorylation of other sites. Interacts with NT5DC2; the interaction results in reduced phosphorylation and decreased catalytic activity of TH. It depends on Fe(2+) as a cofactor. In terms of processing, phosphorylated on Ser-19, Ser-31 and Ser-40 by several protein kinases with different site specificities. Phosphorylation at Ser-31 and Ser-40 leads to an increase of TH activity. Phosphorylation at Ser-40 activates the enzyme and also counteracts the feedback inhibition of TH by catecholamines. Phosphorylation of Ser-19 and Ser-31 triggers the proteasomal degradation of TH through the ubiquitin-proteasome pathway. Phosphorylation at Ser-31 facilitates transport of TH from the soma to the nerve terminals via the microtubule network. Phosphorylation at Ser-19 induces the high-affinity binding to the 14-3-3 protein YWHAG; this interaction may influence the phosphorylation and dephosphorylation of other sites. Ser-19 increases the phosphorylation at Ser-40 in a hierarchical manner, leading to increased activity.

Its subcellular location is the cytoplasm. The protein resides in the perinuclear region. It is found in the nucleus. The protein localises to the cell projection. It localises to the axon. Its subcellular location is the cytoplasmic vesicle. The protein resides in the secretory vesicle. It is found in the synaptic vesicle. It carries out the reaction (6R)-L-erythro-5,6,7,8-tetrahydrobiopterin + L-tyrosine + O2 = (4aS,6R)-4a-hydroxy-L-erythro-5,6,7,8-tetrahydrobiopterin + L-dopa. The protein operates within catecholamine biosynthesis; dopamine biosynthesis; dopamine from L-tyrosine: step 1/2. With respect to regulation, inhibited in feedback fashion by the catecholamine neurotransmitters, especially by dopamine in competition with tetrahydrobiopterin. Phosphorylation of several Ser/Thr residues in the N-terminus regulates the catalytic activity. Ser-31 and Ser-40 are readily phosphorylated to activate the catalytic activity. A cysteine modification induced by N-ethylmaleimide (NEM), inhibits tyrosine 3-monooxygenase activity through the modification of the Cys-177. In terms of biological role, catalyzes the conversion of L-tyrosine to L-dihydroxyphenylalanine (L-Dopa), the rate-limiting step in the biosynthesis of catecholamines, dopamine, noradrenaline, and adrenaline. Uses tetrahydrobiopterin and molecular oxygen to convert tyrosine to L-Dopa. In addition to tyrosine, is able to catalyze the hydroxylation of phenylalanine and tryptophan but with lower specificity. Positively regulates the regression of retinal hyaloid vessels during postnatal development. The sequence is that of Tyrosine 3-monooxygenase (Th) from Rattus norvegicus (Rat).